The following is a 144-amino-acid chain: uncharacterized protein (144 aa).

The disordered stretch occupies residues 98-127; the sequence is PLADGATVDSQASENGEKEAQPTPPKEGLL.

This is an uncharacterized protein from Aedes vexans (Inland floodwater mosquito).